The sequence spans 485 residues: Cyclic GMP-AMP synthase-like receptor (485 aa).

Residues Ser-70 and Glu-82–Asp-84 each bind ATP. The Mg(2+) site is built by Glu-82, Asp-84, and Asp-204. GTP-binding positions include Asp-204 and Arg-247–Glu-254. ATP is bound by residues Lys-271 and Lys-274. Mn(2+) contacts are provided by Ile-298 and Asp-304.

Belongs to the mab-21 family. The cofactor is Mg(2+). It depends on Mn(2+) as a cofactor.

It catalyses the reaction GTP + ATP = 2',3'-cGAMP + 2 diphosphate. The enzyme catalyses GTP + ATP = pppGp(2'-5')A + diphosphate. The catalysed reaction is pppGp(2'-5')A = 2',3'-cGAMP + diphosphate. Its function is as follows. Nucleotidyltransferase that catalyzes the formation of cyclic GMP-AMP (2',3'-cGAMP) from ATP and GTP and plays a key role in innate immunity. Directly binds some unknown ligand, activating the nucleotidyltransferase activity, leading to synthesis of 2',3'-cGAMP, a second messenger that binds to and activates Sting, thereby triggering the immune response via activation of the NF-kappa-B transcription factor. This is Cyclic GMP-AMP synthase-like receptor from Trichogramma pretiosum (Parasitoid wasp).